We begin with the raw amino-acid sequence, 364 residues long: Probable UDP-arabinopyranose mutase 4 (364 aa).

Residues 106-108 (DDD) carry the DXD motif motif. An N-linked (Glc...) arginine glycan is attached at R154.

Belongs to the RGP family. As to quaternary structure, heteromers with RGP1 and RGP2. It depends on Mn(2+) as a cofactor. The cofactor is Mg(2+). In terms of processing, reversibly glycosylated in vitro by UDP-glucose, UDP-xylose and UDP-galactose, but not UDP-mannose. As to expression, specifically expressed in developing seeds.

It localises to the cytoplasm. The protein resides in the cytosol. Its subcellular location is the golgi apparatus. The enzyme catalyses UDP-beta-L-arabinofuranose = UDP-beta-L-arabinopyranose. In terms of biological role, probable UDP-L-arabinose mutase involved in the biosynthesis of cell wall non-cellulosic polysaccharides. This chain is Probable UDP-arabinopyranose mutase 4, found in Arabidopsis thaliana (Mouse-ear cress).